The chain runs to 500 residues: Cytochrome P450 2D3 (500 aa).

Cysteine 446 contributes to the heme binding site.

This sequence belongs to the cytochrome P450 family. It depends on heme as a cofactor.

It localises to the endoplasmic reticulum membrane. It is found in the microsome membrane. The enzyme catalyses an organic molecule + reduced [NADPH--hemoprotein reductase] + O2 = an alcohol + oxidized [NADPH--hemoprotein reductase] + H2O + H(+). In terms of biological role, cytochromes P450 are a group of heme-thiolate monooxygenases. In liver microsomes, this enzyme is involved in an NADPH-dependent electron transport pathway. It oxidizes a variety of structurally unrelated compounds, including steroids, fatty acids, and xenobiotics. The chain is Cytochrome P450 2D3 (Cyp2d3) from Rattus norvegicus (Rat).